Reading from the N-terminus, the 315-residue chain is Phosphomutase-like protein 3 (315 aa).

The N-terminal stretch at 1–19 (MQQFLTLGALWTLFNVATT) is a signal peptide. H77 (tele-phosphohistidine intermediate) is an active-site residue. 2 N-linked (GlcNAc...) asparagine glycosylation sites follow: N88 and N154. E173 acts as the Proton donor/acceptor in catalysis. The N-linked (GlcNAc...) asparagine glycan is linked to N185. Residue N286 is the site of GPI-anchor amidated asparagine attachment. Residues 287 to 315 (DAWDTFKDWCPNPPASISGTATSTATGSA) constitute a propeptide, removed in mature form.

The protein belongs to the phosphoglycerate mutase family.

It is found in the cell membrane. The polypeptide is Phosphomutase-like protein 3 (PGA12) (Candida albicans (strain SC5314 / ATCC MYA-2876) (Yeast)).